Consider the following 247-residue polypeptide: 14-3-3 protein gamma-A (247 aa).

Belongs to the 14-3-3 family. In terms of assembly, homodimer, and heterodimer with other family members.

Its subcellular location is the cytoplasm. Adapter protein implicated in the regulation of a large spectrum of both general and specialized signaling pathways. Binds to a large number of partners, usually by recognition of a phosphoserine or phosphothreonine motif. Binding generally results in the modulation of the activity of the binding partner. The sequence is that of 14-3-3 protein gamma-A (ywhag-a) from Xenopus laevis (African clawed frog).